The chain runs to 202 residues: Small ribosomal subunit protein uS5 (202 aa).

Residues 46 to 109 (LKSEVLSVGF…RRAKLNIVPV (64 aa)) enclose the S5 DRBM domain.

The protein belongs to the universal ribosomal protein uS5 family. Part of the 30S ribosomal subunit. Contacts protein S4.

Its function is as follows. With S4 and S12 plays an important role in translational accuracy. In Thermofilum pendens (strain DSM 2475 / Hrk 5), this protein is Small ribosomal subunit protein uS5.